A 199-amino-acid polypeptide reads, in one-letter code: Outer dense fiber protein 4 (199 aa).

Residues 1–14 (MNIRSLERAGRAGK) show a composition bias toward basic and acidic residues. The segment at 1–25 (MNIRSLERAGRAGKQDGVAVSPGQE) is disordered. At S53 the chain carries Phosphoserine. Helical transmembrane passes span 68-88 (IAQVLASELSLLAFILLVVMV), 109-128 (VTTKIYTSVHIMSLGLLHIY), and 159-179 (LALGLGIILTIWLHLPYIPGL).

The protein localises to the membrane. Functionally, component of the outer dense fibers (ODF) of spermatozoa which could be involved in sperm tail structure, sperm movement and general organization of cellular cytoskeleton. This is Outer dense fiber protein 4 (ODF4) from Bos taurus (Bovine).